The following is a 132-amino-acid chain: UPF0102 protein Acid_2433 (132 aa).

The protein belongs to the UPF0102 family.

This chain is UPF0102 protein Acid_2433, found in Solibacter usitatus (strain Ellin6076).